Consider the following 399-residue polypeptide: Succinate--CoA ligase [ADP-forming] subunit beta (399 aa).

Residues K9–E254 form the ATP-grasp domain. Residues K46, G53–G55, E109, S112, and E117 contribute to the ATP site. The Mg(2+) site is built by N209 and D223. Residues N274 and G331–M333 each bind substrate.

The protein belongs to the succinate/malate CoA ligase beta subunit family. Heterotetramer of two alpha and two beta subunits. Mg(2+) is required as a cofactor.

It catalyses the reaction succinate + ATP + CoA = succinyl-CoA + ADP + phosphate. The enzyme catalyses GTP + succinate + CoA = succinyl-CoA + GDP + phosphate. It functions in the pathway carbohydrate metabolism; tricarboxylic acid cycle; succinate from succinyl-CoA (ligase route): step 1/1. In terms of biological role, succinyl-CoA synthetase functions in the citric acid cycle (TCA), coupling the hydrolysis of succinyl-CoA to the synthesis of either ATP or GTP and thus represents the only step of substrate-level phosphorylation in the TCA. The beta subunit provides nucleotide specificity of the enzyme and binds the substrate succinate, while the binding sites for coenzyme A and phosphate are found in the alpha subunit. This Nitrobacter winogradskyi (strain ATCC 25391 / DSM 10237 / CIP 104748 / NCIMB 11846 / Nb-255) protein is Succinate--CoA ligase [ADP-forming] subunit beta.